A 445-amino-acid chain; its full sequence is Exodeoxyribonuclease 7 large subunit (445 aa).

It belongs to the XseA family. Heterooligomer composed of large and small subunits.

Its subcellular location is the cytoplasm. It catalyses the reaction Exonucleolytic cleavage in either 5'- to 3'- or 3'- to 5'-direction to yield nucleoside 5'-phosphates.. Bidirectionally degrades single-stranded DNA into large acid-insoluble oligonucleotides, which are then degraded further into small acid-soluble oligonucleotides. This chain is Exodeoxyribonuclease 7 large subunit, found in Pasteurella multocida (strain Pm70).